A 122-amino-acid polypeptide reads, in one-letter code: Small ribosomal subunit protein uS13 (122 aa).

The segment at 95 to 122 is disordered; that stretch reads SLPCRGQRTSTNARTRKGPKRAAVKKKK. Positions 108–122 are enriched in basic residues; sequence RTRKGPKRAAVKKKK.

Belongs to the universal ribosomal protein uS13 family. As to quaternary structure, part of the 30S ribosomal subunit. Forms a loose heterodimer with protein S19. Forms two bridges to the 50S subunit in the 70S ribosome.

In terms of biological role, located at the top of the head of the 30S subunit, it contacts several helices of the 16S rRNA. In the 70S ribosome it contacts the 23S rRNA (bridge B1a) and protein L5 of the 50S subunit (bridge B1b), connecting the 2 subunits; these bridges are implicated in subunit movement. Contacts the tRNAs in the A and P-sites. The sequence is that of Small ribosomal subunit protein uS13 from Desulforapulum autotrophicum (strain ATCC 43914 / DSM 3382 / VKM B-1955 / HRM2) (Desulfobacterium autotrophicum).